The primary structure comprises 593 residues: ETS-related transcription factor Elf-2 (593 aa).

The interval 1–34 (MASAVVDSGGSALELPSDGGENQEGGDTGPDCPA) is disordered. Phosphoserine is present on S107. The interval 146–199 (VEVSTEESEPMDASPIPTSPDSHEPMKKKKVGRKPKTQQSPVSNGSPELGIKKK) is disordered. Residues 171–181 (MKKKKVGRKPK) show a composition bias toward basic residues. T182 is subject to Phosphothreonine. Positions 182 to 191 (TQQSPVSNGS) are enriched in polar residues. A phosphoserine mark is found at S185 and S191. Residues 208–290 (TYLWEFLLDL…EGQRLVYQFK (83 aa)) constitute a DNA-binding region (ETS). The tract at residues 362–383 (TSPTHDGSSRSPTTTAPVSAAA) is disordered. A phosphoserine mark is found at S363 and S372. Residues 370 to 383 (SRSPTTTAPVSAAA) are compositionally biased toward low complexity. Position 376 is a phosphothreonine (T376). At S432 the chain carries Phosphoserine. R496 bears the Omega-N-methylarginine mark. The residue at position 523 (T523) is a Phosphothreonine. K538 is covalently cross-linked (Glycyl lysine isopeptide (Lys-Gly) (interchain with G-Cter in SUMO2)).

The protein belongs to the ETS family. As to quaternary structure, interacts with LIM domains of LMO2. Interacts via its N-terminal region with RUNX1. In terms of tissue distribution, expressed in all tissues examined. Highest levels in thymocytes and bone marrow.

It is found in the nucleus. Functionally, probably transcriptionally activates the LYN and BLK promoters and acts synergistically with RUNX1 to transactivate the BLK promoter. In Mus musculus (Mouse), this protein is ETS-related transcription factor Elf-2.